The chain runs to 1665 residues: Cortactin-binding protein 2 (1665 aa).

Positions 120–277 form a coiled coil; that stretch reads RKMQERMSTQ…EQLKRGNDSK (158 aa). Disordered regions lie at residues 203–222, 368–480, and 500–620; these read EKKK…RRST, VSSV…SPTS, and RFTS…PSID. 2 stretches are compositionally biased toward polar residues: residues 388 to 399 and 410 to 429; these read SIGSTPDLASST and TGQT…SMHS. Residues 455–469 are compositionally biased toward low complexity; the sequence is QGNANDQDQNGNTTQ. A compositionally biased stretch (polar residues) spans 470–480; the sequence is SPPSRDVSPTS. Arg500 is modified (asymmetric dimethylarginine). 5 ANK repeats span residues 711 to 741, 745 to 774, 778 to 807, 811 to 840, and 844 to 873; these read GRPT…DINY, DGHS…QIDA, NGFT…NIDH, GGQT…DRSV, and DGWT…PTLG. The segment at 875–902 is disordered; that stretch reads SLNEEEPEPGAFDLDQGQEGSEGTAKPV. Residues 914-944 form an ANK 6 repeat; that stretch reads EGWTAAHIAASKGFKNCLEILCRHGGLEPER. Residues 1447-1495 form a disordered region; sequence CSKKKGENGAWRKVSTNPRKKSGRFSSPTWSKPDLGEEGTKNKTMSQPN. At Ser1526 the chain carries Phosphoserine. Residues 1575 to 1665 form a disordered region; that stretch reads NNLRMPVSQK…KNEQVQKPNK (91 aa). Low complexity-rich tracts occupy residues 1590-1604 and 1623-1641; these read SSHQ…TSKT and SQCS…TRQT. A compositionally biased stretch (polar residues) spans 1656 to 1665; the sequence is KNEQVQKPNK.

Interacts with CTTN/cortactin SH3 domain. Interacts with STRN, STRN4/zinedin and MOB4/phocein; this interactions mediate the association with the STRIPAK core complex and may regulate dendritic spine distribution of the STRIPAK complex in hippocampal neurons. Activation of glutamate receptors weakens the interaction with STRN and STRN4.

Its subcellular location is the cytoplasm. It localises to the cell cortex. It is found in the cell projection. The protein resides in the dendritic spine. Functionally, regulates the dendritic spine distribution of CTTN/cortactin in hippocampal neurons, and thus controls dendritic spinogenesis and dendritic spine maintenance. Associates with the striatin-interacting phosphatase and kinase (STRIPAK) core complex to regulate dendritic spine distribution of the STRIPAK complex in hippocampal neurons. This Dasypus novemcinctus (Nine-banded armadillo) protein is Cortactin-binding protein 2 (CTTNBP2).